Consider the following 216-residue polypeptide: MQPFRLHRGVVAPIDRENVDTDAIIPKQFLKSIKRSGFGVNLFDEWRYLDHGEPGQDPASRRPNPDFVLNQPRYRGASVLLARRNFGCGSSREHAPWAIDQYGFRALIAPSFADIFFNNCFKNGLLPIVLPEAQVARLFDEVAAFPGYELTIDLERQVVVKPDGDELAFDVEPFRRHCLLGGLDDIGLTLRHADKIRAYEAERLLRKPWLANTLAS.

It belongs to the LeuD family. LeuD type 1 subfamily. As to quaternary structure, heterodimer of LeuC and LeuD.

The enzyme catalyses (2R,3S)-3-isopropylmalate = (2S)-2-isopropylmalate. Its pathway is amino-acid biosynthesis; L-leucine biosynthesis; L-leucine from 3-methyl-2-oxobutanoate: step 2/4. Functionally, catalyzes the isomerization between 2-isopropylmalate and 3-isopropylmalate, via the formation of 2-isopropylmaleate. This chain is 3-isopropylmalate dehydratase small subunit, found in Methylibium petroleiphilum (strain ATCC BAA-1232 / LMG 22953 / PM1).